A 130-amino-acid chain; its full sequence is Hydrogenase maturation factor HypA (130 aa).

A Ni(2+)-binding site is contributed by His-2. Zn(2+) is bound by residues Cys-74, Cys-77, Cys-90, and Cys-93.

This sequence belongs to the HypA/HybF family.

Its function is as follows. Involved in the maturation of [NiFe] hydrogenases. Required for nickel insertion into the metal center of the hydrogenase. In Desulfatibacillum aliphaticivorans, this protein is Hydrogenase maturation factor HypA.